The sequence spans 1009 residues: RNA2 polyprotein (1009 aa).

The segment at F387 to G393 is involved in tubule formation by the movement protein.

In terms of assembly, interacts with the large capsid protein. Interacts with the small capsid protein. Homomultimer; assembles as pentons. Interacts with the movement protein (via C-terminus). As to quaternary structure, interacts (via C-terminus) with the large capsid protein. Specific enzymatic cleavages by picornain 3C-like protease in vivo yield mature proteins.

Its subcellular location is the host cell junction. The protein resides in the host plasmodesma. The protein localises to the virion. In terms of biological role, responsible for viral RNA2 accumulation. May function by recruiting the RNA1-encoded polyprotein that contains the replication protein to RNA2 and enable its replication. Functionally, transports the viral genome to neighboring plant cells directly through plasmosdesmata, without any budding. The movement protein allows efficient cell to cell propagation, by bypassing the host cell wall barrier. Acts by forming a tubular structure at the host plasmodesmata, enlarging it enough to allow free passage of virion capsids. Binds to GTP and to single-stranded RNA and single-stranded DNA in a non-sequence-specific manner. Its function is as follows. Together with the small capsid protein, forms an icosahedral capsid (T=3) enclosing the viral positive strand RNA genome, with a diameter of approximately 300 Angstroms. The capsid is formed from 60 copies each of the large and the small capsid protein. The large capsid protein interacts with the viral RNA. Together with the large capsid protein, forms an icosahedral capsid (T=3) enclosing the viral positive strand RNA genome, with a diameter of approximately 300 Angstroms. The capsid is formed from 60 copies each of the large and the small capsid protein. The small capsid protein forms the turrets at the fivefold axes of the viral particle. This chain is RNA2 polyprotein, found in Squash mosaic virus (strain melon) (SqMV).